The sequence spans 272 residues: Pyrroline-5-carboxylate reductase 3 (272 aa).

Belongs to the pyrroline-5-carboxylate reductase family.

It is found in the cytoplasm. It catalyses the reaction L-proline + NADP(+) = (S)-1-pyrroline-5-carboxylate + NADPH + 2 H(+). The catalysed reaction is L-proline + NAD(+) = (S)-1-pyrroline-5-carboxylate + NADH + 2 H(+). It participates in amino-acid biosynthesis; L-proline biosynthesis; L-proline from L-glutamate 5-semialdehyde: step 1/1. Its function is as follows. Catalyzes the reduction of 1-pyrroline-5-carboxylate (PCA) to L-proline. In Bacillus subtilis (strain 168), this protein is Pyrroline-5-carboxylate reductase 3 (proG).